We begin with the raw amino-acid sequence, 727 residues long: MESEDTKKTQEMKTDLNLLLECLKYQMDNAFSQKEALVTIHSICQQNSNASVYFREIGGLMFVKNLAKSSEHSMVKEAALYTLGAIAEKNVYCQQTLCTSELFEDLTWFLSNDSNINLKRMSVYVILVLVSNNRTGQTLVRETGCITVLSRLFRTVISKHELDLSDKNVFQSYQLWSSVCSTLCVCVNNPQNDENQMFCCSLFPHANEWLKNCTTPEIIRPICSFIGLTLANNTYVQKYFVSVGGLDVLSQVLMQLESDSHETLSSAKLAVVVTKTVDACIADNPTFGIVLSKYHIVSKLLALLLHESLDSGEKFSIMLTLGHCTEDCEENQYDLFKNNGLPLMIQALTESQNEELNKAATFVLHNCKKITEKLSLSLGEYPFDENETQQLKDISVKENNLEEHWRKAKEILHRIEQLEREGNEEEIQRENYQDNISSMNISIQNTWKHLHADRIGRGSKAEDEDKSHSRQLQSYKSHGVMSKACTNDDQMKTPLKSANPVHACYRESEQNKTLYKAKSSCNQNLHEETTFEKNFVSQSSDHVFKHPVHIAKNIKQQLPVTDPFTLCSDIINKEVVSFLATPSCSEMLTYRCSGCIAVEKSLNSRNFSKLLHSCPYQCDRHKVIVEAEDRYKSELRKSLICNKKILLTPRRRQRLSNESTTPGGIKKRRIRKNFTEEEVNYLFNGVKKMGNHWNSILWSFPFQQGRKAVDLAHKYHKLTKHPTCAAS.

ARM repeat units lie at residues 101-144 (ELFE…RETG) and 339-382 (NGLP…GEYP). Residues 398 to 446 (ENNLEEHWRKAKEILHRIEQLEREGNEEEIQRENYQDNISSMNISIQNT) are a coiled coil. A compositionally biased stretch (basic and acidic residues) spans 457–468 (RGSKAEDEDKSH). The tract at residues 457–493 (RGSKAEDEDKSHSRQLQSYKSHGVMSKACTNDDQMKT) is disordered. The interval 523–662 (QNLHEETTFE…QRLSNESTTP (140 aa)) is interaction with TERF1. Thr-648 carries the post-translational modification Phosphothreonine. One can recognise a Myb-like domain in the interval 666-719 (KKRRIRKNFTEEEVNYLFNGVKKMGNHWNSILWSFPFQQGRKAVDLAHKYHKLT).

The protein belongs to the TERB1 family. In terms of assembly, component of the MAJIN-TERB1-TERB2 complex, composed of MAJIN, TERB1 and TERB2. Interacts with TERF1, STAG3 and SUN1. Interacts (via Myb-like domain) with the cohesin complex; probably mediated via interaction with STAG3. Post-translationally, phosphorylated by CDK. Phosphorylation by CDK takes place in late prophase when the cap exchange is prominent. is important for the stabilization of telomere attachment but dispenable for the cap exchange.

Its subcellular location is the chromosome. It localises to the telomere. It is found in the nucleus inner membrane. Its function is as follows. Meiosis-specific telomere-associated protein involved in meiotic telomere attachment to the nucleus inner membrane, a crucial step for homologous pairing and synapsis. Component of the MAJIN-TERB1-TERB2 complex, which promotes telomere cap exchange by mediating attachment of telomeric DNA to the inner nuclear membrane and replacement of the protective cap of telomeric chromosomes: in early meiosis, the MAJIN-TERB1-TERB2 complex associates with telomeric DNA and the shelterin/telosome complex. During prophase, the complex matures and promotes release of the shelterin/telosome complex from telomeric DNA. In the MAJIN-TERB1-TERB2 complex, TERB1 probably mediates association with the shelterin/telosome complex via interaction with TERF1, promoting priming telomeric DNA attachment'. Promotes telomere association with the nuclear envelope and deposition of the SUN-KASH/LINC complex. Also recruits cohesin to telomeres to develop structural rigidity. This chain is Telomere repeats-binding bouquet formation protein 1, found in Homo sapiens (Human).